The following is a 695-amino-acid chain: Polyribonucleotide nucleotidyltransferase (695 aa).

D486 and D492 together coordinate Mg(2+). Residues 553-612 form the KH domain; it reads PRIETMQINTSKIATVIGPGGKQIRQIIERSGAQVDINDDGVINIAASTQESINKAKELI. The S1 motif domain occupies 622–690; sequence GKVYNGRVTS…EKGQLKLSHK (69 aa).

Belongs to the polyribonucleotide nucleotidyltransferase family. The cofactor is Mg(2+).

Its subcellular location is the cytoplasm. The catalysed reaction is RNA(n+1) + phosphate = RNA(n) + a ribonucleoside 5'-diphosphate. Involved in mRNA degradation. Catalyzes the phosphorolysis of single-stranded polyribonucleotides processively in the 3'- to 5'-direction. The chain is Polyribonucleotide nucleotidyltransferase from Chlamydia trachomatis serovar A (strain ATCC VR-571B / DSM 19440 / HAR-13).